We begin with the raw amino-acid sequence, 515 residues long: Protein DETOXIFICATION 42 (515 aa).

Residues 1 to 35 (MMSEDGYNTDFPRNPLYIFFSDFRSVLKFDELGLE) are Cytoplasmic-facing. Residues 36-56 (IARIALPAALALTADPIASLV) traverse the membrane as a helical segment. The Extracellular segment spans residues 57–58 (DT). A helical membrane pass occupies residues 59–79 (AFIGQIGPVELAAVGVSIALF). Topologically, residues 80-168 (NQVSRIAIFP…AKKRNIPSAS (89 aa)) are cytoplasmic. Residues 169–189 (SALIIGGVLGLFQAVFLISAA) form a helical membrane-spanning segment. At 190–211 (KPLLSFMGVKHDSPMMRPSQRY) the chain is on the extracellular side. Residues 212 to 232 (LSLRSLGAPAVLLSLAAQGVF) form a helical membrane-spanning segment. The Cytoplasmic segment spans residues 233 to 242 (RGFKDTTTPL). The chain crosses the membrane as a helical span at residues 243–263 (FATVIGDVTNIILDPIFIFVF). The Extracellular segment spans residues 264–266 (RLG). Residues 267 to 287 (VTGAATAHVISQYLMCGILLW) form a helical membrane-spanning segment. Residues 288-312 (KLMGQVDIFNMSTKHLQFCRFMKNG) are Cytoplasmic-facing. Residues 313 to 333 (FLLLMRVIAVTFCVTLSASLA) form a helical membrane-spanning segment. Residues 334–349 (AREGSTSMAAFQVCLQ) lie on the Extracellular side of the membrane. A helical membrane pass occupies residues 350-370 (VWLATSLLADGYAVAGQAILA). Residues 371 to 390 (SAFAKKDYKRAAATASRVLQ) are Cytoplasmic-facing. A helical membrane pass occupies residues 391-411 (LGLVLGFVLAVILGAGLHFGA). Residues 412-423 (RVFTKDDKVLHL) lie on the Extracellular side of the membrane. Residues 424–444 (ISIGLPFVAGTQPINALAFVF) form a helical membrane-spanning segment. Residues 445–453 (DGVNFGASD) lie on the Cytoplasmic side of the membrane. The helical transmembrane segment at 454 to 474 (FGYAAASLVMVAIVSILCLLF) threads the bilayer. The Extracellular segment spans residues 475–480 (LSSTHG). The helical transmembrane segment at 481–501 (FIGLWFGLTIYMSLRAAVGFW) threads the bilayer. The Cytoplasmic portion of the chain corresponds to 502–515 (RIGTGTGPWSFLRS).

It belongs to the multi antimicrobial extrusion (MATE) (TC 2.A.66.1) family. Expressed in roots, but not in shoots. Detected in the mature regions of the root, extending from above the root-hair region to the root-shoot junction.

Its subcellular location is the cell membrane. Citrate transporter critical for aluminum tolerance. Responsible for citrate exudation into the rhizosphere to protect roots from aluminum toxicity. The polypeptide is Protein DETOXIFICATION 42 (Arabidopsis thaliana (Mouse-ear cress)).